The chain runs to 253 residues: Phycoerythrobilin:ferredoxin oxidoreductase (253 aa).

This sequence belongs to the HY2 family.

The catalysed reaction is (3Z)-phycoerythrobilin + oxidized 2[4Fe-4S]-[ferredoxin] = 15,16-dihydrobiliverdin + reduced 2[4Fe-4S]-[ferredoxin] + 2 H(+). In terms of biological role, catalyzes the two-electron reduction of the C2 and C3(1) diene system of 15,16-dihydrobiliverdin. The chain is Phycoerythrobilin:ferredoxin oxidoreductase from Prochlorococcus marinus (strain AS9601).